Reading from the N-terminus, the 231-residue chain is Phosphoglycolate phosphatase, plasmid (231 aa).

D14 (nucleophile) is an active-site residue. The Mg(2+) site is built by D14, D16, and D175.

This sequence belongs to the HAD-like hydrolase superfamily. CbbY/CbbZ/Gph/YieH family. In terms of assembly, homotrimer. The cofactor is Mg(2+).

It carries out the reaction 2-phosphoglycolate + H2O = glycolate + phosphate. The protein operates within organic acid metabolism; glycolate biosynthesis; glycolate from 2-phosphoglycolate: step 1/1. Functionally, specifically catalyzes the dephosphorylation of 2-phosphoglycolate. Is involved in the dissimilation of the intracellular 2-phosphoglycolate formed during the DNA repair of 3'-phosphoglycolate ends, a major class of DNA lesions induced by oxidative stress. This Cupriavidus necator (strain ATCC 17699 / DSM 428 / KCTC 22496 / NCIMB 10442 / H16 / Stanier 337) (Ralstonia eutropha) protein is Phosphoglycolate phosphatase, plasmid (cbbZP).